We begin with the raw amino-acid sequence, 298 residues long: Phosphatidylglycerol--prolipoprotein diacylglyceryl transferase (298 aa).

A run of 7 helical transmembrane segments spans residues 17 to 37 (LAVR…IVVG), 59 to 79 (MMFY…VLFY), 97 to 117 (GGMS…LFAW), 129 to 149 (FVAP…FING), 204 to 224 (SQLY…FLFA), 230 to 250 (MGAI…TVEF), and 257 to 277 (FLGL…PMIL). Arg142 contributes to the a 1,2-diacyl-sn-glycero-3-phospho-(1'-sn-glycerol) binding site.

It belongs to the Lgt family.

The protein resides in the cell inner membrane. The enzyme catalyses L-cysteinyl-[prolipoprotein] + a 1,2-diacyl-sn-glycero-3-phospho-(1'-sn-glycerol) = an S-1,2-diacyl-sn-glyceryl-L-cysteinyl-[prolipoprotein] + sn-glycerol 1-phosphate + H(+). The protein operates within protein modification; lipoprotein biosynthesis (diacylglyceryl transfer). In terms of biological role, catalyzes the transfer of the diacylglyceryl group from phosphatidylglycerol to the sulfhydryl group of the N-terminal cysteine of a prolipoprotein, the first step in the formation of mature lipoproteins. This chain is Phosphatidylglycerol--prolipoprotein diacylglyceryl transferase, found in Burkholderia orbicola (strain MC0-3).